Here is a 303-residue protein sequence, read N- to C-terminus: Y-box-binding protein 1 (303 aa).

Over residues 1–12 the composition is skewed to polar residues; sequence MSSEVETQQQQP. The tract at residues 1 to 28 is disordered; that stretch reads MSSEVETQQQQPDALEGKAGQEPAATVG. One can recognise a CSD domain in the interval 39–103; it reads GTVKWFNVRN…GEKGAEAANV (65 aa). Residues 43-48 form a C5-methylcytosine binding region; the sequence is WFNVRN. The tract at residues 98–303 is disordered; the sequence is AEAANVTGPE…TPEAEQGGAE (206 aa). Basic residues predominate over residues 122 to 132; the sequence is HYRRYPRRRGP. Low complexity-rich tracts occupy residues 133–143 and 173–187; these read PRNYQQNYQNN and PPYY…RPQY. Composition is skewed to basic residues over residues 220–229 and 258–270; these read FRPRFRRGPP and RRYR…RRRR. Residues 271-284 show a composition bias toward basic and acidic residues; it reads PENPKSQDGKETKA.

This sequence belongs to the YBX1 family.

The protein localises to the cytoplasm. It is found in the nucleus. Its subcellular location is the cytoplasmic granule. The protein resides in the secreted. It localises to the extracellular exosome. The protein localises to the P-body. In terms of biological role, DNA- and RNA-binding protein involved in various processes, such as translational repression, RNA stabilization, mRNA splicing and transcription regulation. Binds preferentially to the 5'-[CU]CUGCG-3' RNA motif and specifically recognizes mRNA transcripts modified by C5-methylcytosine (m5C). Promotes mRNA stabilization: acts by binding to m5C-containing mRNAs and preventing mRNA decay. Plays a role in the maternal-to-zygotic transition in early embryo by binding to m5C-containing maternal mRNAs and preventing their degradation. Also promotes maternal-to-zygotic transition in oocytes and embryos by promoting translation repression; molecular mechanisms governing translation repression are unknown. Plays a key role in RNA composition of extracellular exosomes by defining the sorting of small non-coding RNAs, such as tRNAs, Y RNAs, Vault RNAs and miRNAs. Probably sorts RNAs in exosomes by recognizing and binding C5-methylcytosine (m5C)-containing RNAs. Acts as a key effector of epidermal progenitors by preventing epidermal progenitor senescence: acts by regulating the translation of a senescence-associated subset of cytokine mRNAs, possibly by binding to m5C-containing mRNAs. Also involved in pre-mRNA alternative splicing regulation: binds to splice sites in pre-mRNA and regulates splice site selection. Also able to bind DNA and regulate transcription. Binds to promoters that contain a Y-box (5'-CTGATTGGCCAA-3'). Promotes separation of DNA strands that contain mismatches or are modified by cisplatin. Has endonucleolytic activity and can introduce nicks or breaks into double-stranded DNA, suggesting a role in DNA repair. The secreted form acts as an extracellular mitogen and stimulates cell migration and proliferation. This chain is Y-box-binding protein 1, found in Xenopus laevis (African clawed frog).